A 1004-amino-acid chain; its full sequence is 2-oxoglutarate dehydrogenase E1 component (1004 aa).

It belongs to the alpha-ketoglutarate dehydrogenase family. In terms of assembly, homodimer. Part of the 2-oxoglutarate dehydrogenase (OGDH) complex composed of E1 (2-oxoglutarate dehydrogenase), E2 (dihydrolipoamide succinyltransferase) and E3 (dihydrolipoamide dehydrogenase); the complex contains multiple copies of the three enzymatic components (E1, E2 and E3). Thiamine diphosphate is required as a cofactor.

The enzyme catalyses N(6)-[(R)-lipoyl]-L-lysyl-[protein] + 2-oxoglutarate + H(+) = N(6)-[(R)-S(8)-succinyldihydrolipoyl]-L-lysyl-[protein] + CO2. In terms of biological role, E1 component of the 2-oxoglutarate dehydrogenase (OGDH) complex which catalyzes the decarboxylation of 2-oxoglutarate, the first step in the conversion of 2-oxoglutarate to succinyl-CoA and CO(2). The sequence is that of 2-oxoglutarate dehydrogenase E1 component from Brucella suis biovar 1 (strain 1330).